We begin with the raw amino-acid sequence, 224 residues long: Myogenin (224 aa).

Residues Ser77 and Ser79 each carry the phosphoserine; by CaMK2G modification. The bHLH domain maps to 81–132 (DRRRAATLREKRRLKKVNEAFEALKRSTLLNPNQRLPKVEILRSAIQYIERL). A Phosphothreonine; by CaMK2G modification is found at Thr87.

In terms of assembly, homodimer and heterodimer with E12; heterodimerization enhances MYOG DNA-binding and transcriptional activities. Interacts with SMARCA4/BRG1/BAF190A. Interacts (via C-terminal region) with SSRP1 and SUPT16H; the interaction is indicative of an interaction with the FACT complex. nteracts with CSRP3. In terms of processing, phosphorylated by CAMK2G on threonine and serine amino acids in a muscle activity-dependent manner. Phosphorylation of Thr-87 impairs both DNA-binding and trans-activation functions in contracting muscles. As to expression, expressed in myoblast cells. Expressed weakly in myotubes (at protein level). Expressed strongly in denervated muscles and in satellite cells isolated from denervated muscles. Expressed weakly in innervated muscle and in satellite cells isolated from innervated muscles.

It is found in the nucleus. Its function is as follows. Acts as a transcriptional activator that promotes transcription of muscle-specific target genes and plays a role in muscle differentiation, cell cycle exit and muscle atrophy. Essential for the development of functional embryonic skeletal fiber muscle differentiation. However is dispensable for postnatal skeletal muscle growth; phosphorylation by CAMK2G inhibits its transcriptional activity in respons to muscle activity. Required for the recruitment of the FACT complex to muscle-specific promoter regions, thus promoting gene expression initiation. During terminal myoblast differentiation, plays a role as a strong activator of transcription at loci with an open chromatin structure previously initiated by MYOD1. Together with MYF5 and MYOD1, co-occupies muscle-specific gene promoter core regions during myogenesis. Also cooperates with myocyte-specific enhancer factor MEF2D and BRG1-dependent recruitment of SWI/SNF chromatin-remodeling enzymes to alter chromatin structure at myogenic late gene promoters. Facilitates cell cycle exit during terminal muscle differentiation through the up-regulation of miR-20a expression, which in turn represses genes involved in cell cycle progression. Binds to the E-box containing (E1) promoter region of the miR-20a gene. Also plays a role in preventing reversal of muscle cell differentiation. Contributes to the atrophy-related gene expression in adult denervated muscles. Induces fibroblasts to differentiate into myoblasts. This Mus musculus (Mouse) protein is Myogenin (Myog).